We begin with the raw amino-acid sequence, 225 residues long: Phosphatidylserine decarboxylase proenzyme (225 aa).

S188 acts as the Schiff-base intermediate with substrate; via pyruvic acid in catalysis. S188 carries the pyruvic acid (Ser); by autocatalysis modification.

The protein belongs to the phosphatidylserine decarboxylase family. PSD-A subfamily. Heterodimer of a large membrane-associated beta subunit and a small pyruvoyl-containing alpha subunit. Pyruvate is required as a cofactor. Post-translationally, is synthesized initially as an inactive proenzyme. Formation of the active enzyme involves a self-maturation process in which the active site pyruvoyl group is generated from an internal serine residue via an autocatalytic post-translational modification. Two non-identical subunits are generated from the proenzyme in this reaction, and the pyruvate is formed at the N-terminus of the alpha chain, which is derived from the carboxyl end of the proenzyme. The post-translation cleavage follows an unusual pathway, termed non-hydrolytic serinolysis, in which the side chain hydroxyl group of the serine supplies its oxygen atom to form the C-terminus of the beta chain, while the remainder of the serine residue undergoes an oxidative deamination to produce ammonia and the pyruvoyl prosthetic group on the alpha chain.

The protein localises to the cell membrane. It carries out the reaction a 1,2-diacyl-sn-glycero-3-phospho-L-serine + H(+) = a 1,2-diacyl-sn-glycero-3-phosphoethanolamine + CO2. Its pathway is phospholipid metabolism; phosphatidylethanolamine biosynthesis; phosphatidylethanolamine from CDP-diacylglycerol: step 2/2. In terms of biological role, catalyzes the formation of phosphatidylethanolamine (PtdEtn) from phosphatidylserine (PtdSer). The polypeptide is Phosphatidylserine decarboxylase proenzyme (Parvibaculum lavamentivorans (strain DS-1 / DSM 13023 / NCIMB 13966)).